A 329-amino-acid polypeptide reads, in one-letter code: Ribosomal RNA small subunit methyltransferase C (329 aa).

Belongs to the methyltransferase superfamily. RsmC family. In terms of assembly, monomer.

It localises to the cytoplasm. The catalysed reaction is guanosine(1207) in 16S rRNA + S-adenosyl-L-methionine = N(2)-methylguanosine(1207) in 16S rRNA + S-adenosyl-L-homocysteine + H(+). Functionally, specifically methylates the guanine in position 1207 of 16S rRNA in the 30S particle. The chain is Ribosomal RNA small subunit methyltransferase C from Actinobacillus pleuropneumoniae serotype 5b (strain L20).